The sequence spans 332 residues: Cell growth regulator with RING finger domain protein 1 (332 aa).

The RING-type zinc-finger motif lies at 274-309; the sequence is CVVCQNGTVNWVLLPCRHTCLCDGCVKYFQQCPMCR.

Ubiquitously expressed with high expression in testis and the cerebellum.

Its subcellular location is the nucleus. It localises to the endoplasmic reticulum. In terms of biological role, able to inhibit growth in several cell lines. The chain is Cell growth regulator with RING finger domain protein 1 (CGRRF1) from Homo sapiens (Human).